The primary structure comprises 446 residues: Tol-Pal system protein TolB (446 aa).

Residues 1–43 form the signal peptide; that stretch reads MRKLWAPNWLSRRQNANPTRDQSRHALMAWLAAALMSAGAAHA.

This sequence belongs to the TolB family. The Tol-Pal system is composed of five core proteins: the inner membrane proteins TolA, TolQ and TolR, the periplasmic protein TolB and the outer membrane protein Pal. They form a network linking the inner and outer membranes and the peptidoglycan layer.

It localises to the periplasm. In terms of biological role, part of the Tol-Pal system, which plays a role in outer membrane invagination during cell division and is important for maintaining outer membrane integrity. In Cupriavidus metallidurans (strain ATCC 43123 / DSM 2839 / NBRC 102507 / CH34) (Ralstonia metallidurans), this protein is Tol-Pal system protein TolB.